A 517-amino-acid chain; its full sequence is MFS efflux transporter inpD (517 aa).

Positions 1-24 are disordered; it reads MEKTQTPSLTPDELSARSSTPFEE. 5 helical membrane passes run 37-57, 59-79, 89-109, 112-132, and 151-171; these read LKFSFIFVGLCLSVFQVALSL, DIGWYGSAYLFTDCAFQLVFG, IVYLGALLLFEIGSIICATAP, IALILGRTIAGIGAGGILSGA, and ILGAVNGIAFICGPLLAGGII. Asparagine 172 is a glycosylation site (N-linked (GlcNAc...) asparagine). 9 helical membrane-spanning segments follow: residues 178 to 198, 219 to 239, 247 to 267, 292 to 312, 328 to 348, 352 to 372, 381 to 401, 412 to 432, and 485 to 505; these read WIFYINPIISAPTFFITVFLL, LPAFTLFLGSILCLILALLWG, NARIIVLFILFGVIMLAFMLV, FFSFCTSGTGFILEYYLPIWL, LPIIAAAVVFTTLCGILTPVI, VPFMIIATMLLSVGMGLLSTL, VLGFQVPAGVGLGCALQQTLV, IPIGVSLIVLAQTLGGTIALS, and AIVKTWYLSIGLAAASIIGVL.

This sequence belongs to the major facilitator superfamily.

It localises to the cell membrane. MFS efflux transporter; part of the inp gene cluster that mediates the biosynthesis of fellutamide B, a mycotoxin that acts as a proteasome inhibitor. In the first step of fellutabmide B biosynthesis inpC activates 3-hydroxydodecanoic acid to generate 3-hydroxydodecanoyl-AMP that is then loaded onto the T0 domain of inpB. The 3-hydroxydodecanoyl-S-phosphopantetheinyl-T0 is sequentially extended with L-Asn and L-Gln by the two CAT modules of inpB. The linear lipodipeptide from inpB is then transferred onto inpA for the addition of the third amino acid, L-Leu. Reductive releasing of the lipotripeptide by the TE domain of inpA produces (2S)-fellutamide B. InpF might be involved in the release and transfer of the lipodipeptide from inpB to inpA. The inp cluster-encoded proteasome subunit inpE confers resistance to internally produced fellutamides. The MFS efflux transporter inpD may contribute to fellutamide resistance as well. The polypeptide is MFS efflux transporter inpD (Emericella nidulans (strain FGSC A4 / ATCC 38163 / CBS 112.46 / NRRL 194 / M139) (Aspergillus nidulans)).